Reading from the N-terminus, the 467-residue chain is ATP synthase subunit beta (467 aa).

Residue 156-163 participates in ATP binding; sequence GGAGVGKT.

This sequence belongs to the ATPase alpha/beta chains family. F-type ATPases have 2 components, CF(1) - the catalytic core - and CF(0) - the membrane proton channel. CF(1) has five subunits: alpha(3), beta(3), gamma(1), delta(1), epsilon(1). CF(0) has three main subunits: a(1), b(2) and c(9-12). The alpha and beta chains form an alternating ring which encloses part of the gamma chain. CF(1) is attached to CF(0) by a central stalk formed by the gamma and epsilon chains, while a peripheral stalk is formed by the delta and b chains.

The protein resides in the cell inner membrane. It carries out the reaction ATP + H2O + 4 H(+)(in) = ADP + phosphate + 5 H(+)(out). Produces ATP from ADP in the presence of a proton gradient across the membrane. The catalytic sites are hosted primarily by the beta subunits. This chain is ATP synthase subunit beta, found in Cupriavidus necator (strain ATCC 17699 / DSM 428 / KCTC 22496 / NCIMB 10442 / H16 / Stanier 337) (Ralstonia eutropha).